Consider the following 259-residue polypeptide: Ras-related protein Rab-34 (259 aa).

M1 is modified (N-acetylmethionine). Residues S62, V63, G64, K65, T66, D78, Y81, and T84 each coordinate GTP. Residue T66 participates in Mg(2+) binding. The short motif at 71 to 89 (RFCKDTFDKNYKATIGVDF) is the Switch 1 element. Positions 84 and 107 each coordinate Mg(2+). The short motif at 108–127 (TAGQERFKCIASTYYRGAQA) is the Switch 2 element. GTP contacts are provided by G110, K167, D169, and S198. Residues S241 and S244 each carry the phosphoserine modification. S-geranylgeranyl cysteine attachment occurs at residues C257 and C258.

This sequence belongs to the small GTPase superfamily. Rab family. Interacts with RILP. The GTP-bound form interacts with REP15. Requires Mg(2+) as cofactor.

It is found in the cytoplasm. The protein resides in the golgi apparatus. It localises to the cytoplasmic vesicle. The protein localises to the phagosome. Its subcellular location is the phagosome membrane. It is found in the cell projection. The protein resides in the cilium. It localises to the cytoskeleton. The protein localises to the microtubule organizing center. Its subcellular location is the centrosome. It is found in the centriole. The catalysed reaction is GTP + H2O = GDP + phosphate + H(+). Its activity is regulated as follows. Regulated by guanine nucleotide exchange factors (GEFs) which promote the exchange of bound GDP for free GTP. Regulated by GTPase activating proteins (GAPs) which increase the GTP hydrolysis activity. Inhibited by GDP dissociation inhibitors (GDIs). Its function is as follows. The small GTPases Rab are key regulators of intracellular membrane trafficking, from the formation of transport vesicles to their fusion with membranes. Rabs cycle between an inactive GDP-bound form and an active GTP-bound form that is able to recruit to membranes different sets of downstream effectors directly responsible for vesicle formation, movement, tethering and fusion. RAB34 transports protein involved in the redistribution of lysosomes to the peri-Golgi region. Plays a role in the maturation of phagosomes that engulf pathogens, such as S.aureus and M.tuberculosis. Plays a role in the fusion of phagosomes with lysosomes. Required for the early steps of intracellular ciliogenesis, the cilium assembly pathway initiated by trafficking and docking of ciliary vesicles to the centrioles in the cytoplasm, followed by axoneme formation in the cytoplasm. After axoneme elongation, the centrioles migrate close to the cell surface so that ciliary vesicles can fuse with the plasma membrane to expose cilia to the extracellular space. It seems dispensable for ciliogenesis via the extracellular pathway where cilium assembly begins after migration and docking of the centriole to the plasma membrane. Also acts as a positive regulator of hedgehog signaling and regulates ciliary function. The protein is Ras-related protein Rab-34 (RAB34) of Sus scrofa (Pig).